A 31-amino-acid chain; its full sequence is Cycloviolacin-O23 (31 aa).

Positions 1-31 (GLPTCGETCFGGTCNTPGCTCDSSWPICTHN) form a cross-link, cyclopeptide (Gly-Asn). 3 disulfide bridges follow: C5-C19, C9-C21, and C14-C28.

Post-translationally, this is a cyclic peptide. In terms of tissue distribution, expressed in leaves but not in petals, petioles, roots and runners (at protein level).

Its function is as follows. Probably participates in a plant defense mechanism. This Viola odorata (Sweet violet) protein is Cycloviolacin-O23.